The chain runs to 208 residues: MKIVEVKHPLVKHKLGLMRAADINTKDFRALATEVGSLLTYEATTDLETEAIEIDGWCGKVEVERIKGKKVTVVPILRAGLGMMDGVLEHIPSARISVVGIYRNEETLEPVPYFTKLANDVEERLAIIVDPMLATGGSMIATIDLLKKAGCKQIKVLVLVAAPEGIKALEAAHPDVELYTASIDSHLNEHGYIVPGLGDAGDKIFGTK.

5-phospho-alpha-D-ribose 1-diphosphate-binding positions include Arg-78, Arg-103, and Asp-130 to Ser-138. Uracil contacts are provided by residues Ile-193 and Gly-198–Ala-200. Asp-199 serves as a coordination point for 5-phospho-alpha-D-ribose 1-diphosphate.

Belongs to the UPRTase family. Requires Mg(2+) as cofactor.

The enzyme catalyses UMP + diphosphate = 5-phospho-alpha-D-ribose 1-diphosphate + uracil. It participates in pyrimidine metabolism; UMP biosynthesis via salvage pathway; UMP from uracil: step 1/1. With respect to regulation, allosterically activated by GTP. Functionally, catalyzes the conversion of uracil and 5-phospho-alpha-D-ribose 1-diphosphate (PRPP) to UMP and diphosphate. This chain is Uracil phosphoribosyltransferase, found in Actinobacillus pleuropneumoniae serotype 5b (strain L20).